The primary structure comprises 430 residues: Putative chloroquine resistance transporter (430 aa).

A disordered region spans residues 1-22 (MLKEGSSLDLSASSSSGTLRSD). Over 1–53 (MLKEGSSLDLSASSSSGTLRSDNSFGNSPLDRITSLLILIYKSIRACFKWIYS) the chain is Cytoplasmic. The span at 7–21 (SLDLSASSSSGTLRS) shows a compositional bias: low complexity. Residues 54-74 (KSFGIICILFVILDVLTTVFF) form a helical membrane-spanning segment. Residues 75–88 (KRFIDHTKNYVMFT) are Vacuolar-facing. A helical transmembrane segment spans residues 89–109 (IQVIIFTFWIIVCCIAILCFL). Residues 110–122 (FNREYMKRHFNVR) lie on the Cytoplasmic side of the membrane. A helical membrane pass occupies residues 123–143 (PLVFLGFLDMLSTGLSANGSA). Topologically, residues 144–147 (HTSG) are vacuolar. Residues 148 to 168 (LMLVLLGQISVPLTMVSCKLI) form a helical membrane-spanning segment. Over 169–173 (LSKKY) the chain is Cytoplasmic. A helical transmembrane segment spans residues 174–194 (HHYQYISSAIILTFAVLKPIL). A glycan (N-linked (GlcNAc...) asparagine) is linked at Asn-195. Residues 195-206 (NRTDTTDNRFYN) are Vacuolar-facing. A helical transmembrane segment spans residues 207-223 (NMLYLLASVPDSIASAL). The Cytoplasmic portion of the chain corresponds to 224 to 239 (REKQYTSKFFHVVKYQ). The helical transmembrane segment at 240 to 260 (FFGFLFHFFYNILYTLLFTLP) threads the bilayer. At 261–306 (FNSVKGYFDSLYKLCVNGYKCIFFGVNTITENCGPTLIPTCDNCLE) the chain is on the vacuolar side. 2 cysteine pairs are disulfide-bonded: Cys-281/Cys-304 and Cys-293/Cys-301. Residues 307-329 (AFKIYCLYILFSSAIRVAYVFIM) form a helical membrane-spanning segment. Over 330–335 (LDGSVT) the chain is Cytoplasmic. A helical membrane pass occupies residues 336 to 358 (FTLLLGTVKVPLTSIAFSLRFIA). Over 359 to 364 (GDSTTS) the chain is Vacuolar. The helical transmembrane segment at 365 to 385 (FNLLDVVCFLGIVAGLLLYAL) threads the bilayer. At 386–430 (GSKKIQEETDLLESPLIDDAESEHELLSTGTEKLMRSEICHDLFT) the chain is on the cytoplasmic side.

This sequence belongs to the CRT-like transporter family.

It is found in the vacuole membrane. Functionally, nutrient transporter. Involved in maintaining the osmotic homeostasis of the digestive vacuole. This chain is Putative chloroquine resistance transporter, found in Theileria annulata.